The chain runs to 591 residues: Acyl-CoA-dependent acyltransferase MAC1 (591 aa).

A peroxisomal targeting signal type 1 region spans residues 589–591; it reads ARL.

Belongs to the trichothecene O-acetyltransferase family.

The protein localises to the peroxisome. It participates in secondary metabolite biosynthesis. In terms of biological role, acyl-CoA-dependent acyltransferase; part of the gene cluster that mediates the biosynthesis of mannosylerythritol lipids (MELs), surface-active substances that enhance the availability of water-insoluble substrates. Mannosylerythritol lipid production is responsible for hemolytic activity of Ustilago maydis. Depending on the number of acetyl groups, mannosylerythritol lipids can be differentiated into MEL A (fully acetylated), MEL B and MEL C (monoacetylated at R-6 and R-4, respectively), and the fully deacetylated MEL D. The first step in the pathway is the generation of mannosylerythritol by the glycosyltransferase EMT1 which catalyzes the transfer of GDP-mannose to the C-4 atom of meso-erythritol. This reaction has to be stereospecific, since only mannosyl-D-erythritol is generated. The produced disaccharide is subsequently acylated with fatty acids of various lengths derived from the peroxisomal beta-oxidation by the peroxisomal acyltransferases MAC1 and MAC2 at positions C-2 and C-3, repectively. The existence of MEL derivatives which carry an acetyl group at C-2 implies that at least MAC1 also accepts acetyl-CoA as a donor. The final step of MEL biosynthesis is the acetylation of the fully acylated mannosylerythritol lipids catalyzed by the acetyl-CoA-dependent acetyltransferase MAT1. MAT1 displays a relaxed regioselectivity and is able to transfer acetylgroups to both positions C-4 and C-6 of the mannosyl moiety. This chain is Acyl-CoA-dependent acyltransferase MAC1, found in Mycosarcoma maydis (Corn smut fungus).